Consider the following 59-residue polypeptide: Transcription elongation factor Spt4 (59 aa).

Zn(2+) contacts are provided by C4, C7, C16, and C19.

This sequence belongs to the archaeal Spt4 family. In terms of assembly, heterodimer composed of Spt4 and Spt5.

In terms of biological role, stimulates transcription elongation. The chain is Transcription elongation factor Spt4 from Methanocaldococcus jannaschii (strain ATCC 43067 / DSM 2661 / JAL-1 / JCM 10045 / NBRC 100440) (Methanococcus jannaschii).